We begin with the raw amino-acid sequence, 216 residues long: Maintenance of carboxysome distribution protein A (216 aa).

The ATP site is built by Gly16, Gly17, Gly19, Lys20, Thr21, Thr22, and Gln45. Thr21 is a binding site for Mg(2+).

This sequence belongs to the ParA family. McdA subfamily. Self-associates, associates with McdB.

It is found in the cytoplasm. The protein resides in the nucleoid. The enzyme catalyses ATP + H2O = ADP + phosphate + H(+). In terms of biological role, mcdA and McdB together mediate carboxysome positioning on the nucleoid and prevent their aggregation in the cell. McdA is an ATPase that forms dynamic gradients on the nucleoid in response to adapter protein McdB, which associates with carboxysomes. The interplay between McdA gradients on the nucleoid and McdB-bound carboxysomes result in the equal spacing of Cbs along the cell length. Its function is as follows. Incorrect positioning (aggregation) of carboxysomes results in reduced CO(2) fixation by encapsulated form 1 ribulose-1,5-bisphosphate carboxylase (RuBisCO, cbbL/cbbS), which leads to slower growth. This is Maintenance of carboxysome distribution protein A from Halothiobacillus neapolitanus (strain ATCC 23641 / c2) (Thiobacillus neapolitanus).